A 266-amino-acid chain; its full sequence is rRNA adenine N-6-methyltransferase (266 aa).

S-adenosyl-L-methionine-binding residues include His-14, Thr-16, Gly-41, Glu-62, Asp-87, and Asn-103.

It belongs to the class I-like SAM-binding methyltransferase superfamily. rRNA adenine N(6)-methyltransferase family.

Its function is as follows. Involved in erythromycin resistance. This is rRNA adenine N-6-methyltransferase (ermFU) from Bacteroides fragilis.